Reading from the N-terminus, the 435-residue chain is uncharacterized protein (435 aa).

Helical transmembrane passes span 40-60, 103-123, 133-153, 195-215, 226-246, 313-333, 358-378, 381-401, and 414-434; these read LVST…EAVF, VLWT…WLIL, IMLA…IYNP, LIHE…IIVL, ICTA…AVVG, VAVV…LFFV, LALP…AVDW, WWVM…IDRP, and VFVC…NNIG.

It is found in the cell membrane. This is an uncharacterized protein from Mycobacterium bovis (strain ATCC BAA-935 / AF2122/97).